A 163-amino-acid polypeptide reads, in one-letter code: Putative 4-hydroxy-4-methyl-2-oxoglutarate aldolase (163 aa).

Substrate-binding positions include Gly76–Ile79 and Arg98. Asp99 is a binding site for a divalent metal cation.

The protein belongs to the class II aldolase/RraA-like family. As to quaternary structure, homotrimer. Requires a divalent metal cation as cofactor.

It catalyses the reaction 4-hydroxy-4-methyl-2-oxoglutarate = 2 pyruvate. The enzyme catalyses oxaloacetate + H(+) = pyruvate + CO2. In terms of biological role, catalyzes the aldol cleavage of 4-hydroxy-4-methyl-2-oxoglutarate (HMG) into 2 molecules of pyruvate. Also contains a secondary oxaloacetate (OAA) decarboxylase activity due to the common pyruvate enolate transition state formed following C-C bond cleavage in the retro-aldol and decarboxylation reactions. The polypeptide is Putative 4-hydroxy-4-methyl-2-oxoglutarate aldolase (Pseudomonas fluorescens (strain Pf0-1)).